A 156-amino-acid chain; its full sequence is Small ribosomal subunit protein uS7 (156 aa).

This sequence belongs to the universal ribosomal protein uS7 family. Part of the 30S ribosomal subunit. Contacts proteins S9 and S11.

Its function is as follows. One of the primary rRNA binding proteins, it binds directly to 16S rRNA where it nucleates assembly of the head domain of the 30S subunit. Is located at the subunit interface close to the decoding center, probably blocks exit of the E-site tRNA. The polypeptide is Small ribosomal subunit protein uS7 (Rhodococcus erythropolis (strain PR4 / NBRC 100887)).